The primary structure comprises 135 residues: Mediator of RNA polymerase II transcription subunit 10 (135 aa).

The protein belongs to the Mediator complex subunit 10 family. Component of the Mediator complex, which is composed of MED1, MED4, MED6, MED7, MED8, MED9, MED10, MED11, MED12, MED13, MED13L, MED14, MED15, MED16, MED17, MED18, MED19, MED20, MED21, MED22, MED23, MED24, MED25, MED26, MED27, MED29, MED30, MED31, CCNC, CDK8 and CDC2L6/CDK11. The MED12, MED13, CCNC and CDK8 subunits form a distinct module termed the CDK8 module. Mediator containing the CDK8 module is less active than Mediator lacking this module in supporting transcriptional activation. Individual preparations of the Mediator complex lacking one or more distinct subunits have been variously termed ARC, CRSP, DRIP, PC2, SMCC and TRAP.

The protein localises to the nucleus. In terms of biological role, component of the Mediator complex, a coactivator involved in the regulated transcription of nearly all RNA polymerase II-dependent genes. Mediator functions as a bridge to convey information from gene-specific regulatory proteins to the basal RNA polymerase II transcription machinery. Mediator is recruited to promoters by direct interactions with regulatory proteins and serves as a scaffold for the assembly of a functional preinitiation complex with RNA polymerase II and the general transcription factors. This chain is Mediator of RNA polymerase II transcription subunit 10 (MED10), found in Macaca fascicularis (Crab-eating macaque).